Reading from the N-terminus, the 329-residue chain is D-alanine--D-alanine ligase (329 aa).

In terms of domain architecture, ATP-grasp spans 120 to 326 (KLWLSAIGIP…FAHYLEQILR (207 aa)). 150–205 (ALAKWGKVFIKAASQGSSVGCYSASNETDLLQGIKDAFGYSEQVLIEKAVKPRELE) lines the ATP pocket. Positions 280, 293, and 295 each coordinate Mg(2+).

This sequence belongs to the D-alanine--D-alanine ligase family. Requires Mg(2+) as cofactor. The cofactor is Mn(2+).

It localises to the cytoplasm. The catalysed reaction is 2 D-alanine + ATP = D-alanyl-D-alanine + ADP + phosphate + H(+). The protein operates within cell wall biogenesis; peptidoglycan biosynthesis. Functionally, cell wall formation. This is D-alanine--D-alanine ligase from Aeromonas salmonicida (strain A449).